A 323-amino-acid polypeptide reads, in one-letter code: Cyclin-H (323 aa).

The segment at 296-323 (GYEDDGYISKKPKTEEDEWTDEDFGDSL) is disordered. The segment covering 310-323 (EEDEWTDEDFGDSL) has biased composition (acidic residues).

The protein belongs to the cyclin family. Cyclin C subfamily. As to quaternary structure, associates primarily with CDK7 and MAT1 to form the CAK complex. CAK can further associate with the core-TFIIH to form the TFIIH basal transcription factor.

It is found in the nucleus. In terms of biological role, regulates CDK7, the catalytic subunit of the CDK-activating kinase (CAK) enzymatic complex. CAK activates the cyclin-associated kinases CDK1, CDK2, CDK4 and CDK6 by threonine phosphorylation. CAK complexed to the core-TFIIH basal transcription factor activates RNA polymerase II by serine phosphorylation of the repetitive C-terminal domain (CTD) of its large subunit (POLR2A), allowing its escape from the promoter and elongation of the transcripts. Involved in cell cycle control and in RNA transcription by RNA polymerase II. Its expression and activity are constant throughout the cell cycle. In Xenopus laevis (African clawed frog), this protein is Cyclin-H (ccnh).